Reading from the N-terminus, the 338-residue chain is Nicotinate-nucleotide--dimethylbenzimidazole phosphoribosyltransferase (338 aa).

Catalysis depends on Glu306, which acts as the Proton acceptor.

Belongs to the CobT family.

It carries out the reaction 5,6-dimethylbenzimidazole + nicotinate beta-D-ribonucleotide = alpha-ribazole 5'-phosphate + nicotinate + H(+). It participates in nucleoside biosynthesis; alpha-ribazole biosynthesis; alpha-ribazole from 5,6-dimethylbenzimidazole: step 1/2. Its function is as follows. Catalyzes the synthesis of alpha-ribazole-5'-phosphate from nicotinate mononucleotide (NAMN) and 5,6-dimethylbenzimidazole (DMB). This Cereibacter sphaeroides (strain KD131 / KCTC 12085) (Rhodobacter sphaeroides) protein is Nicotinate-nucleotide--dimethylbenzimidazole phosphoribosyltransferase.